We begin with the raw amino-acid sequence, 466 residues long: Glutamate--tRNA ligase (466 aa).

The 'HIGH' region motif lies at 10–20; it reads PSPTGALHIGG. 4 residues coordinate Zn(2+): cysteine 99, cysteine 101, cysteine 126, and aspartate 128. The 'KMSKS' region motif lies at 239–243; the sequence is KLSKR. Lysine 242 contacts ATP.

Belongs to the class-I aminoacyl-tRNA synthetase family. Glutamate--tRNA ligase type 1 subfamily. In terms of assembly, monomer. The cofactor is Zn(2+).

The protein localises to the cytoplasm. It carries out the reaction tRNA(Glu) + L-glutamate + ATP = L-glutamyl-tRNA(Glu) + AMP + diphosphate. In terms of biological role, catalyzes the attachment of glutamate to tRNA(Glu) in a two-step reaction: glutamate is first activated by ATP to form Glu-AMP and then transferred to the acceptor end of tRNA(Glu). This chain is Glutamate--tRNA ligase, found in Pelagibacter ubique (strain HTCC1062).